Here is a 91-residue protein sequence, read N- to C-terminus: Small ribosomal subunit protein uS19 (91 aa).

It belongs to the universal ribosomal protein uS19 family.

Protein S19 forms a complex with S13 that binds strongly to the 16S ribosomal RNA. This is Small ribosomal subunit protein uS19 from Exiguobacterium sp. (strain ATCC BAA-1283 / AT1b).